We begin with the raw amino-acid sequence, 327 residues long: uncharacterized protein (327 aa).

The segment at 129 to 306 is disordered; the sequence is TPLQNQEATT…DNKKTVTTSS (178 aa). Residues 130-144 are compositionally biased toward polar residues; it reads PLQNQEATTSPTIES. Composition is skewed to basic and acidic residues over residues 184–196 and 233–276; these read KSVE…DRNV and TKDE…EKIV.

This is an uncharacterized protein from Caenorhabditis elegans.